Reading from the N-terminus, the 31-residue chain is Cytochrome b6-f complex subunit 8 (31 aa).

The chain crosses the membrane as a helical span at residues 5–25 (IVSMAWAALMVVFTFSLSLVI).

It belongs to the PetN family. As to quaternary structure, the 4 large subunits of the cytochrome b6-f complex are cytochrome b6, subunit IV (17 kDa polypeptide, PetD), cytochrome f and the Rieske protein, while the 4 small subunits are PetG, PetL, PetM and PetN. The complex functions as a dimer.

It is found in the plastid membrane. Component of the cytochrome b6-f complex, which mediates electron transfer between photosystem II (PSII) and photosystem I (PSI), cyclic electron flow around PSI, and state transitions. In Cuscuta gronovii (Common dodder), this protein is Cytochrome b6-f complex subunit 8.